Reading from the N-terminus, the 351-residue chain is N(4)-bis(aminopropyl)spermidine synthase (351 aa).

The protein belongs to the branched-chain polyamine synthase family.

The protein localises to the cytoplasm. The catalysed reaction is 2 S-adenosyl 3-(methylsulfanyl)propylamine + spermidine = N(4)-bis(aminopropyl)spermidine + 2 S-methyl-5'-thioadenosine + 2 H(+). It participates in amine and polyamine biosynthesis. In terms of biological role, involved in the biosynthesis of branched-chain polyamines, which support the growth of thermophiles under high-temperature conditions. Catalyzes the sequential condensation of spermidine with the aminopropyl groups of decarboxylated S-adenosylmethionines to produce N(4)-bis(aminopropyl)spermidine via N(4)-aminopropylspermidine. Can also use spermine to produce N(4)-aminopropylspermine. The polypeptide is N(4)-bis(aminopropyl)spermidine synthase (Thermococcus kodakarensis (strain ATCC BAA-918 / JCM 12380 / KOD1) (Pyrococcus kodakaraensis (strain KOD1))).